The following is a 122-amino-acid chain: Large ribosomal subunit protein uL14 (122 aa).

This sequence belongs to the universal ribosomal protein uL14 family. As to quaternary structure, part of the 50S ribosomal subunit. Forms a cluster with proteins L3 and L19. In the 70S ribosome, L14 and L19 interact and together make contacts with the 16S rRNA in bridges B5 and B8.

Its function is as follows. Binds to 23S rRNA. Forms part of two intersubunit bridges in the 70S ribosome. In Solibacter usitatus (strain Ellin6076), this protein is Large ribosomal subunit protein uL14.